The primary structure comprises 146 residues: D-aminoacyl-tRNA deacylase (146 aa).

The Gly-cisPro motif, important for rejection of L-amino acids motif lies at 137 to 138 (GP).

This sequence belongs to the DTD family. In terms of assembly, homodimer.

Its subcellular location is the cytoplasm. It carries out the reaction glycyl-tRNA(Ala) + H2O = tRNA(Ala) + glycine + H(+). The enzyme catalyses a D-aminoacyl-tRNA + H2O = a tRNA + a D-alpha-amino acid + H(+). Its function is as follows. An aminoacyl-tRNA editing enzyme that deacylates mischarged D-aminoacyl-tRNAs. Also deacylates mischarged glycyl-tRNA(Ala), protecting cells against glycine mischarging by AlaRS. Acts via tRNA-based rather than protein-based catalysis; rejects L-amino acids rather than detecting D-amino acids in the active site. By recycling D-aminoacyl-tRNA to D-amino acids and free tRNA molecules, this enzyme counteracts the toxicity associated with the formation of D-aminoacyl-tRNA entities in vivo and helps enforce protein L-homochirality. The protein is D-aminoacyl-tRNA deacylase of Bacillus mycoides (strain KBAB4) (Bacillus weihenstephanensis).